We begin with the raw amino-acid sequence, 827 residues long: Zinc phosphodiesterase ELAC protein 2 (827 aa).

The N-terminal 16 residues, 1 to 16, are a transit peptide targeting the mitochondrion; that stretch reads MWALRSLLRPLGLRTM. Disordered regions lie at residues 15-46 and 181-220; these read TMSQ…GWGP and SERR…QCLP. Basic and acidic residues predominate over residues 181–192; sequence SERRCGEQEPSR. Residues serine 193, serine 197, serine 202, serine 207, serine 617, and serine 735 each carry the phosphoserine modification. A compositionally biased stretch (polar residues) spans 199-210; sequence NRLSPKQSSSDP. Residues 794–827 form a disordered region; the sequence is LTQQADSSEDREPHQKRAHSEEPHSPQSKKVRAQ. Threonine 795 is subject to Phosphothreonine. Position 800 is a phosphoserine (serine 800). Over residues 801–817 the composition is skewed to basic and acidic residues; the sequence is SEDREPHQKRAHSEEPH. Serine 818 carries the post-translational modification Phosphoserine.

This sequence belongs to the RNase Z family. Homodimer. Interacts with PTCD1. It depends on Zn(2+) as a cofactor.

The protein resides in the mitochondrion. The protein localises to the mitochondrion matrix. It localises to the mitochondrion nucleoid. Its subcellular location is the nucleus. It carries out the reaction Endonucleolytic cleavage of RNA, removing extra 3' nucleotides from tRNA precursor, generating 3' termini of tRNAs. A 3'-hydroxy group is left at the tRNA terminus and a 5'-phosphoryl group is left at the trailer molecule.. In terms of biological role, zinc phosphodiesterase, which displays mitochondrial tRNA 3'-processing endonuclease activity. Involved in tRNA maturation, by removing a 3'-trailer from precursor tRNA. Associates with mitochondrial DNA complexes at the nucleoids to initiate RNA processing and ribosome assembly. The polypeptide is Zinc phosphodiesterase ELAC protein 2 (Elac2) (Rattus norvegicus (Rat)).